The chain runs to 247 residues: ATP synthase subunit a 1 (247 aa).

Transmembrane regions (helical) follow at residues 32-52, 82-102, 112-132, 141-161, 181-201, and 206-226; these read YMLLAVVLIAGMMLAAGRALV, FFPLVFSLFMFIFVSNIVGII, IIVTFSLALLVFLTVIIYGFY, LFVPSGIPAVILPLVVVIEII, GHVTLKVFASFVTMLGALGFV, and ALLPLGLTVALTGLELMVAFL.

This sequence belongs to the ATPase A chain family. As to quaternary structure, F-type ATPases have 2 components, CF(1) - the catalytic core - and CF(0) - the membrane proton channel. CF(1) has five subunits: alpha(3), beta(3), gamma(1), delta(1), epsilon(1). CF(0) has four main subunits: a, b, b' and c.

The protein resides in the cell inner membrane. Key component of the proton channel; it plays a direct role in the translocation of protons across the membrane. This Bradyrhizobium sp. (strain BTAi1 / ATCC BAA-1182) protein is ATP synthase subunit a 1.